The chain runs to 1250 residues: Protein suppressor of variegation 3-7 (1250 aa).

2 disordered regions span residues 107–148 and 160–186; these read LNNP…HSYH and HDPGDSQDDDDEDDESSNGGGVDGGMR. Residues 132-141 show a composition bias toward polar residues; the sequence is STKTEPSSDA. Positions 164–175 are enriched in acidic residues; that stretch reads DSQDDDDEDDES. Ser165, Ser175, and Ser176 each carry phosphoserine. 4 C2H2-type zinc fingers span residues 217 to 236, 319 to 343, 425 to 446, and 487 to 512; these read CLYCNISINVNNRSRHIQQH, CRICSVRMNVEFVYLRKRHETTKGH, CTLCNCTMAITSFLRHCKTRAH, and CSVCRKRFMYGNSEIKRKNHEKSEKH. Basic and acidic residues predominate over residues 343-354; that stretch reads HMEALRNLDSDK. Positions 343–398 are disordered; sequence HMEALRNLDSDKRSRKRKRSKSNSVTNSGGDEAEREKESEPEVGPEDAQDTPVVMM. Residues 525-564 form a disordered region; it reads VGSADGRGGDNMDEEEAAASDQAQSSQTDDSEDNDDDNWS. Residues 543–552 are compositionally biased toward low complexity; that stretch reads ASDQAQSSQT. Residues 553–563 show a composition bias toward acidic residues; sequence DDSEDNDDDNW. The C2H2-type 5 zinc finger occupies 605–629; that stretch reads QICKFCRVRFHNEAAKARHELSARH. Positions 642–684 are disordered; that stretch reads KLHQGTNTQTKHNAQDDEESQEQDEEYGEEEEDAEEDSQSNFD. Acidic residues predominate over residues 657 to 679; sequence DDEESQEQDEEYGEEEEDAEEDS. 2 C2H2-type zinc fingers span residues 737–761 and 829–852; these read CKLCEVSLYLPSSKWASKHQRTSRH and CRVCDSRLPIKVFYLRQHDASRKH. Residues 851–860 are compositionally biased toward basic and acidic residues; sequence KHVENKERQR. The tract at residues 851–915 is disordered; it reads KHVENKERQR…PLAKRSRRSM (65 aa). Phosphoserine is present on residues Ser871 and Ser873. Positions 879-897 are enriched in basic and acidic residues; it reads DAERQESGMDKESENDMSV. The residue at position 975 (Ser975) is a Phosphoserine. The 40-residue stretch at 987–1026 folds into the BESS domain; it reads RHVMDLFFDSISPTMKSLPPDLAAEGKSKIMQLVCSLELR. A compositionally biased stretch (low complexity) spans 1032–1055; sequence ATTPTPATVSASSKWPSSTTVTPV. Disordered regions lie at residues 1032 to 1060, 1079 to 1116, 1154 to 1180, and 1205 to 1236; these read ATTPTPATVSASSKWPSSTTVTPVKTPPA, TTPHEYNNGQNNNNDKETVPKEPVTGASSAQVTINGSA, QSRTNVNGRLSQGGTSEAPSTPQADLS, and NTPQMQQPQQAQASITSSTPIMRGGPSSNGCQ. Polar residues-rich tracts occupy residues 1079–1091 and 1104–1114; these read TTPHEYNNGQNNN and GASSAQVTING. Residues 1206-1224 are compositionally biased toward low complexity; it reads TPQMQQPQQAQASITSSTP.

Interacts with Su(var)39 through the BESS domain.

The protein localises to the nucleus. In terms of biological role, dose-limiting factor in position-effect variegation, the inactivation in some cells of a gene translocated next to heterochromatin. It could play a role in chromosome condensation. The polypeptide is Protein suppressor of variegation 3-7 (Su(var)3-7) (Drosophila melanogaster (Fruit fly)).